The sequence spans 391 residues: Lipid-A-disaccharide synthase (391 aa).

Belongs to the LpxB family.

It carries out the reaction a lipid X + a UDP-2-N,3-O-bis[(3R)-3-hydroxyacyl]-alpha-D-glucosamine = a lipid A disaccharide + UDP + H(+). It participates in bacterial outer membrane biogenesis; LPS lipid A biosynthesis. In terms of biological role, condensation of UDP-2,3-diacylglucosamine and 2,3-diacylglucosamine-1-phosphate to form lipid A disaccharide, a precursor of lipid A, a phosphorylated glycolipid that anchors the lipopolysaccharide to the outer membrane of the cell. The protein is Lipid-A-disaccharide synthase of Azoarcus sp. (strain BH72).